The following is a 482-amino-acid chain: QWRF motif-containing protein 3 (482 aa).

A compositionally biased stretch (basic and acidic residues) spans 1-20 (MKSCEHELLKTRRGKSREVS). Disordered stretches follow at residues 1-60 (MKSC…GLKK) and 171-220 (TAKP…QWAL). Positions 21 to 42 (SRFLSSPSASSSPNRRNSTSNS) are enriched in low complexity. Polar residues predominate over residues 191 to 219 (RTNSSKGIENRLQRNNSVSRYGSSMSQWA). The QWRF motif signature appears at 292 to 295 (QWRF).

It belongs to the QWRF family.

This chain is QWRF motif-containing protein 3 (QWRF3), found in Arabidopsis thaliana (Mouse-ear cress).